Consider the following 591-residue polypeptide: NADH-quinone oxidoreductase subunit C/D (591 aa).

The interval M1–Q182 is NADH dehydrogenase I subunit C. Positions D206 to R591 are NADH dehydrogenase I subunit D.

The protein in the N-terminal section; belongs to the complex I 30 kDa subunit family. It in the C-terminal section; belongs to the complex I 49 kDa subunit family. NDH-1 is composed of 13 different subunits. Subunits NuoB, CD, E, F, and G constitute the peripheral sector of the complex.

Its subcellular location is the cell inner membrane. The catalysed reaction is a quinone + NADH + 5 H(+)(in) = a quinol + NAD(+) + 4 H(+)(out). Its function is as follows. NDH-1 shuttles electrons from NADH, via FMN and iron-sulfur (Fe-S) centers, to quinones in the respiratory chain. The immediate electron acceptor for the enzyme in this species is believed to be ubiquinone. Couples the redox reaction to proton translocation (for every two electrons transferred, four hydrogen ions are translocated across the cytoplasmic membrane), and thus conserves the redox energy in a proton gradient. The sequence is that of NADH-quinone oxidoreductase subunit C/D from Psychrobacter cryohalolentis (strain ATCC BAA-1226 / DSM 17306 / VKM B-2378 / K5).